Consider the following 1402-residue polypeptide: Eukaryotic translation initiation factor 4 gamma 1 (1402 aa).

Disordered regions lie at residues 1–123 (MSGA…SPEP) and 165–402 (HEPN…YEYK). Phosphothreonine occurs at positions 11 and 27. The span at 53 to 64 (GPEHSPSESQPS) shows a compositional bias: low complexity. A compositionally biased stretch (pro residues) spans 65-76 (SPSPTPSPPPIL). S120 bears the Phosphoserine mark. Residues 238 to 251 (ASATPPAVPSATPA) show a composition bias toward low complexity. The span at 261–275 (QEEEGEEEEEEEEGE) shows a compositional bias: acidic residues. Basic and acidic residues-rich tracts occupy residues 280-290 (ESDKGGEDLHP) and 324-340 (KELN…DAFK). The segment covering 359–370 (PTPESEGSSGPS) has biased composition (low complexity). A compositionally biased stretch (basic and acidic residues) spans 379-388 (WDAKEDKIHN). The residue at position 452 (T452) is a Phosphothreonine. Disordered stretches follow at residues 476–517 (ANLG…PPKG), 536–563 (AEKA…GSKT), 600–636 (SKGS…ATTE), and 828–1028 (MAKG…KREA). A compositionally biased stretch (low complexity) spans 479-488 (GRPALSSRGP). An omega-N-methylarginine mark is found at R490 and R499. A compositionally biased stretch (basic and acidic residues) spans 547 to 563 (TAADKDRGEEDADGSKT). The MIF4G domain maps to 567–793 (FRRVRSILNK…QDVLDLRQSN (227 aa)). The span at 602–621 (GSLTSSLRRPFQNPTSQWPS) shows a compositional bias: polar residues. At S832 the chain carries Phosphoserine. 2 positions are modified to omega-N-methylarginine: R836 and R846. Residues S881 and S896 each carry the phosphoserine modification. Low complexity predominate over residues 892-913 (GGRLSWGKGSSGSGAKPSDAAS). K899 carries the post-translational modification N6-acetyllysine. A compositionally biased stretch (polar residues) spans 918–937 (PATSTLNRFSALQQAVPTES). Phosphoserine is present on residues S948 and S950. Residues 949–981 (LSRERGGKAGEPRRRLERSERGGDRGDRLDRAR) show a composition bias toward basic and acidic residues. S988 is subject to Phosphoserine; by PKC/PRKCA. Residues 989–1028 (FSKEVEERSRERPSQPEGLRKAASLTEDRDRGRDAAKREA) are compositionally biased toward basic and acidic residues. A phosphoserine mark is found at S990, S997, and S1012. The residue at position 1014 (T1014) is a Phosphothreonine. S1034 and S1041 each carry phosphoserine. The MI domain occupies 1044 to 1166 (ELEKKSKAII…PMGELFREIT (123 aa)). Positions 1231 to 1401 (EESEAPGQRA…REVEEEESDH (171 aa)) constitute a W2 domain. At S1399 the chain carries Phosphoserine.

This sequence belongs to the eukaryotic initiation factor 4G family. EIF4F is a multi-subunit complex, the composition of which varies with external and internal environmental conditions. It is composed of at least EIF4A, EIF4E (cap-binding) and EIF4G1/EIF4G3. Interacts with eIF3 complex, mutually exclusive with EIF4A1 or EIF4A2, EIF4E and through its N-terminus with PABPC1. Interacts with EIF4E or with EIF1 (mutually exclusive) through a common binding site. Interacts through its C-terminus with the serine/threonine kinases MKNK1, and with MKNK2. Appears to act as a scaffold protein, holding these enzymes in place to phosphorylate EIF4E. Non-phosphorylated EIF4EBP1 competes with EIF4G1/EIF4G3 to interact with EIF4E; insulin stimulated MAP-kinase (MAPK1 and MAPK3) phosphorylation of EIF4EBP1 causes dissociation of the complex allowing EIF4G1/EIF4G3 to bind and consequent initiation of translation. EIF4G1/EIF4G3 interacts with PABPC1 to bring about circularization of the mRNA. Interacts with EIF4E3. Interacts with CIRBP and MIF4GD. Interacts with RBM4. Interacts with HNRNPD/AUF1; the interaction requires RNA. Interacts with DDX3X; the interaction requires RNA. Interacts with DAZAP2. Post-translationally, phosphorylated at multiple sites in vivo. Phosphorylation at Ser-988 by PRKCA induces binding to MKNK1.

It localises to the cytoplasm. The protein localises to the nucleus. The protein resides in the stress granule. In terms of biological role, component of the protein complex eIF4F, which is involved in the recognition of the mRNA cap, ATP-dependent unwinding of 5'-terminal secondary structure and recruitment of mRNA to the ribosome. Exists in two complexes, either with EIF1 or with EIF4E (mutually exclusive). Together with EIF1, is required for leaky scanning, in particular for avoiding cap-proximal start codon. Together with EIF4E, antagonizes the scanning promoted by EIF1-EIF4G1 and locates the start codon (through a TISU element) without scanning. As a member of the eIF4F complex, required for endoplasmic reticulum stress-induced ATF4 mRNA translation. The sequence is that of Eukaryotic translation initiation factor 4 gamma 1 (EIF4G1) from Oryctolagus cuniculus (Rabbit).